Consider the following 954-residue polypeptide: Endogenous retrovirus group K member 25 Pol protein (954 aa).

In terms of domain architecture, Reverse transcriptase spans 57–245; that stretch reads LEKGHIEPSF…TPFHYLGMQI (189 aa). An LPQG motif is present at residues 161–164; the sequence is LPQG. The short motif at 195–198 is the YXDD element; it reads YIDD. The RNase H type-1 domain occupies 460–588; sequence LENALTVFTD…ADLLVSSALI (129 aa). Residues Asp-469, Glu-497, Asp-515, and Asp-580 each coordinate Mg(2+). The Integrase-type zinc-finger motif lies at 585-626; that stretch reads SALIKAQELHALTHVNAAGLKNKFDVTWKLAKDIVQHCTQCQ. Zn(2+) is bound by residues His-594, His-598, Cys-622, and Cys-625. One can recognise an Integrase catalytic domain in the interval 640–801; that stretch reads RGLCPNALWQ…TSAEQHLTGK (162 aa). The integrase-type DNA-binding region spans 809–857; it reads KLIWWKDNKNKTWEIGKVITWGRGFACVSPGENQLPVWIPTRHLKFYNE. The segment at 862–888 is disordered; it reads AKKSTSAETETPQSSTVDSQDEQNGDV. A compositionally biased stretch (polar residues) spans 867–879; it reads SAETETPQSSTVD.

Belongs to the beta type-B retroviral polymerase family. HERV class-II K(HML-2) pol subfamily.

It carries out the reaction DNA(n) + a 2'-deoxyribonucleoside 5'-triphosphate = DNA(n+1) + diphosphate. The enzyme catalyses Endonucleolytic cleavage to 5'-phosphomonoester.. In terms of biological role, early post-infection, the reverse transcriptase converts the viral RNA genome into double-stranded viral DNA. The RNase H domain of the reverse transcriptase performs two functions. It degrades the RNA template and specifically removes the RNA primer from the RNA/DNA hybrid. Following nuclear import, the integrase catalyzes the insertion of the linear, double-stranded viral DNA into the host cell chromosome. Endogenous Pol proteins may have kept, lost or modified their original function during evolution. The protein is Endogenous retrovirus group K member 25 Pol protein (ERVK-25) of Homo sapiens (Human).